The following is a 225-amino-acid chain: Phosphoserine phosphatase (225 aa).

Met-1 is subject to N-acetylmethionine. Asp-20 serves as the catalytic Nucleophile. Residues Asp-20 and Asp-22 each coordinate Mg(2+). 20-22 (DVD) contacts L-serine. Asp-22 serves as the catalytic Proton donor. Met-52 serves as a coordination point for O-phospho-L-serine. A phosphate-binding site is contributed by Gly-53. Residues 109 to 111 (SGG) and Lys-158 contribute to the L-serine site. O-phospho-L-serine-binding positions include 109 to 111 (SGG) and Lys-158. Asp-179 contributes to the Mg(2+) binding site. Thr-182 lines the O-phospho-L-serine pocket. A phosphate-binding site is contributed by Thr-182.

Belongs to the HAD-like hydrolase superfamily. SerB family. Homodimer. Mg(2+) serves as cofactor.

It localises to the cytoplasm. It is found in the cytosol. It catalyses the reaction O-phospho-L-serine + H2O = L-serine + phosphate. It carries out the reaction O-phospho-D-serine + H2O = D-serine + phosphate. Its pathway is amino-acid biosynthesis; L-serine biosynthesis; L-serine from 3-phospho-D-glycerate: step 3/3. With respect to regulation, inhibited by calcium ions. Catalyzes the last irreversible step in the biosynthesis of L-serine from carbohydrates, the dephosphorylation of O-phospho-L-serine to L-serine. L-serine can then be used in protein synthesis, to produce other amino acids, in nucleotide metabolism or in glutathione synthesis, or can be racemized to D-serine, a neuromodulator. May also act on O-phospho-D-serine. This is Phosphoserine phosphatase from Homo sapiens (Human).